Consider the following 514-residue polypeptide: Peptide chain release factor 3 (514 aa).

Positions 8 to 268 constitute a tr-type G domain; that stretch reads KKRRTFAIIS…IFLKFAPEPH (261 aa). Residues 17-24, 85-89, and 139-142 contribute to the GTP site; these read SHPDAGKT, DTPGH, and NKLD.

This sequence belongs to the TRAFAC class translation factor GTPase superfamily. Classic translation factor GTPase family. PrfC subfamily.

It localises to the cytoplasm. Its function is as follows. Increases the formation of ribosomal termination complexes and stimulates activities of RF-1 and RF-2. It binds guanine nucleotides and has strong preference for UGA stop codons. It may interact directly with the ribosome. The stimulation of RF-1 and RF-2 is significantly reduced by GTP and GDP, but not by GMP. The sequence is that of Peptide chain release factor 3 from Streptococcus pneumoniae (strain CGSP14).